The primary structure comprises 70 residues: Alpha-toxin Bot9 (70 aa).

An LCN-type CS-alpha/beta domain is found at 6–69 (RDGYIVYPNN…PIKDPSYKCY (64 aa)). 4 disulfide bridges follow: C16–C68, C20–C40, C26–C50, and C30–C52.

Belongs to the long (4 C-C) scorpion toxin superfamily. Sodium channel inhibitor family. Alpha subfamily. As to expression, expressed by the venom gland.

Its subcellular location is the secreted. Functionally, alpha toxins bind voltage-independently at site-3 of sodium channels (Nav) and inhibit the inactivation of the activated channels, thereby blocking neuronal transmission. This toxin is active against rat Nav1.2/SCN2A and B.germanica Nav1. The polypeptide is Alpha-toxin Bot9 (Buthus occitanus tunetanus (Common European scorpion)).